A 583-amino-acid polypeptide reads, in one-letter code: Chromosomal replication initiator protein DnaA (583 aa).

A domain I, interacts with DnaA modulators region spans residues 1–91; that stretch reads MNAENLDPAT…SPMFPAFKVM (91 aa). 2 disordered regions span residues 86–179 and 197–232; these read PAFK…QQPV and VAGFGPSVAGTTAPQYPPQSEMQGSFTPGVTGNYRD. Positions 91 to 235 are domain II; it reads MPPAQPEPQT…VTGNYRDPVT (145 aa). A compositionally biased stretch (polar residues) spans 97–106; that stretch reads EPQTTASPED. 2 stretches are compositionally biased toward basic and acidic residues: residues 126–135 and 147–174; these read EDSRTPRHSA and QEREDSAVHMARPDEQTAESHREPEHEP. Polar residues predominate over residues 205–226; the sequence is AGTTAPQYPPQSEMQGSFTPGV. The domain III, AAA+ region stretch occupies residues 236–460; the sequence is HLNSNDTFDT…GALKRVIAMA (225 aa). The ATP site is built by G280, G282, K283, and T284. The interval 461–583 is domain IV, binds dsDNA; sequence SLNHQPVTRA…TVELKQHLND (123 aa).

This sequence belongs to the DnaA family. As to quaternary structure, oligomerizes as a right-handed, spiral filament on DNA at oriC.

The protein resides in the cytoplasm. Functionally, plays an essential role in the initiation and regulation of chromosomal replication. ATP-DnaA binds to the origin of replication (oriC) to initiate formation of the DNA replication initiation complex once per cell cycle. Binds the DnaA box (a 9 base pair repeat at the origin) and separates the double-stranded (ds)DNA. Forms a right-handed helical filament on oriC DNA; dsDNA binds to the exterior of the filament while single-stranded (ss)DNA is stabiized in the filament's interior. The ATP-DnaA-oriC complex binds and stabilizes one strand of the AT-rich DNA unwinding element (DUE), permitting loading of DNA polymerase. After initiation quickly degrades to an ADP-DnaA complex that is not apt for DNA replication. Binds acidic phospholipids. In Bifidobacterium animalis subsp. lactis (strain AD011), this protein is Chromosomal replication initiator protein DnaA.